The primary structure comprises 599 residues: UvrABC system protein C (599 aa).

A GIY-YIG domain is found at 15–93; that stretch reads PCPGVYRMLD…IKALQPRYNV (79 aa). The UVR domain maps to 202–237; sequence QQVINELVIRMEEASGQLAFEQAAYYRDRIASLRQI.

The protein belongs to the UvrC family. As to quaternary structure, interacts with UvrB in an incision complex.

The protein resides in the cytoplasm. The UvrABC repair system catalyzes the recognition and processing of DNA lesions. UvrC both incises the 5' and 3' sides of the lesion. The N-terminal half is responsible for the 3' incision and the C-terminal half is responsible for the 5' incision. This chain is UvrABC system protein C, found in Nitrosococcus oceani (strain ATCC 19707 / BCRC 17464 / JCM 30415 / NCIMB 11848 / C-107).